Reading from the N-terminus, the 561-residue chain is Oligo-1,6-glucosidase 1 (561 aa).

Ca(2+) is bound by residues Asp20, Asn22, Asp24, Phe26, and Asp28. Catalysis depends on Asp199, which acts as the Nucleophile. Residue Glu255 is the Proton donor of the active site.

This sequence belongs to the glycosyl hydrolase 13 family.

Its subcellular location is the cytoplasm. The catalysed reaction is Hydrolysis of (1-&gt;6)-alpha-D-glucosidic linkages in some oligosaccharides produced from starch and glycogen by alpha-amylase, and in isomaltose.. Its function is as follows. Hydrolyzes various disaccharides such as sucrose, maltose, and isomaltose with different efficiencies. Also hydrolyzes longer maltodextrins from maltotriose up to maltohexaose, but not maltoheptaose, palatinose, isomaltotriose, or isomaltotetraose. The chain is Oligo-1,6-glucosidase 1 (malL) from Bacillus subtilis (strain 168).